A 153-amino-acid chain; its full sequence is Selenoprotein F (153 aa).

Positions 1–19 are cleaved as a signal peptide; sequence MAGEVYLLWLLPLLQGLAS. U84 is a non-standard amino acid (selenocysteine).

The protein belongs to the selenoprotein M/F family. Higher levels in polster, prechordal plate, axis, otic vesicle and somites. Lower levels in fin buds.

The protein resides in the endoplasmic reticulum lumen. Its function is as follows. May be involved in redox reactions associated with the formation of disulfide bonds. May contribute to the quality control of protein folding in the endoplasmic reticulum. The protein is Selenoprotein F of Danio rerio (Zebrafish).